The chain runs to 432 residues: D-amino acid dehydrogenase (432 aa).

3 to 17 serves as a coordination point for FAD; the sequence is VVILGSGVVGVTSAW.

The protein belongs to the DadA oxidoreductase family. The cofactor is FAD.

The catalysed reaction is a D-alpha-amino acid + A + H2O = a 2-oxocarboxylate + AH2 + NH4(+). Its pathway is amino-acid degradation; D-alanine degradation; NH(3) and pyruvate from D-alanine: step 1/1. Oxidative deamination of D-amino acids. The chain is D-amino acid dehydrogenase from Salmonella dublin (strain CT_02021853).